Consider the following 1527-residue polypeptide: Lysophospholipase nte1 (1527 aa).

The Cytoplasmic segment spans residues 1-69 (MADDGGPFPL…PPPAPSTMVG (69 aa)). Residues 70-90 (WIGWVFSFVFQVIPSILYWAI) form a helical membrane-spanning segment. At 91–112 (TFCTITLPTWLFTLFSMSLTFT) the chain is on the lumenal side. A helical membrane pass occupies residues 113–133 (MNFTTLLLIALAIVSTVSWFI). Residues 134-1527 (RYRFLNMYSR…RTLAPRRASI (1394 aa)) lie on the Cytoplasmic side of the membrane. Disordered regions lie at residues 240–259 (ADHE…GQNV), 299–387 (LSSS…HPDI), 576–596 (EKEQ…PFHR), and 750–785 (AHGE…RRQS). Residues 355–373 (HLEESRGTPDHDHQPESRT) show a composition bias toward basic and acidic residues. Residues 685–804 (GGTS…VGSV) and 846–966 (RLTS…IAQR) contribute to the a nucleoside 3',5'-cyclic phosphate site. Positions 761–771 (RTTTASSRTSS) are enriched in low complexity. The PNPLA domain occupies 1224–1388 (LVLGGGGARG…IDNLTVPHMK (165 aa)). Positions 1228-1233 (GGGARG) match the GXGXXG motif. The GXSXG signature appears at 1255-1259 (GTSIG). Ser1257 serves as the catalytic Nucleophile. Asp1375 functions as the Proton acceptor in the catalytic mechanism. The DGA/G motif lies at 1375–1377 (DGG).

This sequence belongs to the NTE family.

The protein resides in the endoplasmic reticulum membrane. The enzyme catalyses a 1-acyl-sn-glycero-3-phosphocholine + H2O = sn-glycerol 3-phosphocholine + a fatty acid + H(+). Its activity is regulated as follows. Inhibited by organophosphorus esters. In terms of biological role, intracellular phospholipase B that catalyzes the double deacylation of phosphatidylcholine (PC) to glycerophosphocholine (GroPCho). Plays an important role in membrane lipid homeostasis. Responsible for the rapid PC turnover in response to inositol, elevated temperatures, or when choline is present in the growth medium. In Aspergillus terreus (strain NIH 2624 / FGSC A1156), this protein is Lysophospholipase nte1 (nte1).